We begin with the raw amino-acid sequence, 140 residues long: Gas vesicle protein O (140 aa).

Basic and acidic residues predominate over residues 1-14; it reads MSDQGNEHANHDGI. The segment at 1-61 is disordered; that stretch reads MSDQGNEHAN…DSTIGLSDAQ (61 aa). Polar residues predominate over residues 39–56; that stretch reads QTASDEAVSNQSPDSTIG.

The protein belongs to the gas vesicle GvpO family. Forms homodimers, forms a GvpN-GvpO heterodimer, interacts with GvpC, GvpF, GvpI and GvpL, might interact with GvpA.

It is found in the gas vesicle. The protein localises to the cytoplasm. Functionally, a minor component of the gas vesicle (GV), may play a role in transcription and/or RNA stability and/or in GV assembly. Gas vesicles are small, hollow, gas filled protein structures found in some microorganisms. They allow positioning of halobacteria at the optimal depth for growth in the poorly aerated shallow brine pools of their habitat. Expression of a 9.5 kb mc-vac DNA fragment containing 2 divergently transcribed regions (gvpD-gvpE-gvpF-gvpG-gvpH-gvpI-gvpJ-gvpK-gvpL-gvpM and gvpA-gvpC-gvpN-gvpO) allows H.volcanii to produce gas vesicles. The protein is Gas vesicle protein O of Haloferax mediterranei (strain ATCC 33500 / DSM 1411 / JCM 8866 / NBRC 14739 / NCIMB 2177 / R-4) (Halobacterium mediterranei).